The chain runs to 188 residues: Putative manganese efflux pump MntP (188 aa).

6 consecutive transmembrane segments (helical) span residues 1–21, 40–60, 64–84, 105–127, 131–153, and 166–186; these read MLIQILLIGVSVSMDTFAVSI, LWFGGFQALFPLLGYFAASTF, VTAVDHWIIFGLLALIGGNMV, HMLPLAVACSIDAVAVGVSFAFM, IWLSVVIIGITTGLFSAAGLYIG, and IAGGVVLILIGLKVLFEHLGF.

Belongs to the MntP (TC 9.B.29) family.

Its subcellular location is the cell membrane. Functionally, probably functions as a manganese efflux pump. This Bifidobacterium adolescentis (strain ATCC 15703 / DSM 20083 / NCTC 11814 / E194a) protein is Putative manganese efflux pump MntP.